The sequence spans 201 residues: MPPLTPQRAAVLAFLQEQAQAGVSPSLAEIAQAFGFASRNAAQKHVQALAEAGLIELLPNQKRGIRVPGGAGRDALLNLPVLGRVAAGVPIGADIGLERQLWLDRALFSLRPDYLLQVQGDSMIDDGILDGDLVGVHRSKEARDGQIVVARVDGEITIKRLERGTERIRLLPRNRAHAPIVVAADADFAIEGLYCGLIRQG.

The H-T-H motif DNA-binding region spans Leu-27 to Gln-47. Residues Ser-122 and Lys-159 each act as for autocatalytic cleavage activity in the active site.

Belongs to the peptidase S24 family. Homodimer.

It carries out the reaction Hydrolysis of Ala-|-Gly bond in repressor LexA.. In terms of biological role, represses a number of genes involved in the response to DNA damage (SOS response), including recA and lexA. In the presence of single-stranded DNA, RecA interacts with LexA causing an autocatalytic cleavage which disrupts the DNA-binding part of LexA, leading to derepression of the SOS regulon and eventually DNA repair. This chain is LexA repressor 1, found in Xanthomonas oryzae pv. oryzae (strain KACC10331 / KXO85).